The primary structure comprises 115 residues: T cell receptor beta variable 11-1 (115 aa).

The first 21 residues, 1 to 21 (MSTRLLCWMALCLLGAELSEA), serve as a signal peptide directing secretion. An Ig-like domain is found at 22–115 (EVAQSPRYKI…SAMYLCASSL (94 aa)). The cysteines at positions 42 and 111 are disulfide-linked.

As to quaternary structure, alpha-beta TR is a heterodimer composed of an alpha and beta chain; disulfide-linked. The alpha-beta TR is associated with the transmembrane signaling CD3 coreceptor proteins to form the TR-CD3 (TcR or TCR). The assembly of alpha-beta TR heterodimers with CD3 occurs in the endoplasmic reticulum where a single alpha-beta TR heterodimer associates with one CD3D-CD3E heterodimer, one CD3G-CD3E heterodimer and one CD247 homodimer forming a stable octameric structure. CD3D-CD3E and CD3G-CD3E heterodimers preferentially associate with TR alpha and TR beta chains, respectively. The association of the CD247 homodimer is the last step of TcR assembly in the endoplasmic reticulum and is required for transport to the cell surface.

It is found in the cell membrane. Functionally, v region of the variable domain of T cell receptor (TR) beta chain that participates in the antigen recognition. Alpha-beta T cell receptors are antigen specific receptors which are essential to the immune response and are present on the cell surface of T lymphocytes. Recognize peptide-major histocompatibility (MH) (pMH) complexes that are displayed by antigen presenting cells (APC), a prerequisite for efficient T cell adaptive immunity against pathogens. Binding of alpha-beta TR to pMH complex initiates TR-CD3 clustering on the cell surface and intracellular activation of LCK that phosphorylates the ITAM motifs of CD3G, CD3D, CD3E and CD247 enabling the recruitment of ZAP70. In turn ZAP70 phosphorylates LAT, which recruits numerous signaling molecules to form the LAT signalosome. The LAT signalosome propagates signal branching to three major signaling pathways, the calcium, the mitogen-activated protein kinase (MAPK) kinase and the nuclear factor NF-kappa-B (NF-kB) pathways, leading to the mobilization of transcription factors that are critical for gene expression and essential for T cell growth and differentiation. The T cell repertoire is generated in the thymus, by V-(D)-J rearrangement. This repertoire is then shaped by intrathymic selection events to generate a peripheral T cell pool of self-MH restricted, non-autoaggressive T cells. Post-thymic interaction of alpha-beta TR with the pMH complexes shapes TR structural and functional avidity. The chain is T cell receptor beta variable 11-1 from Homo sapiens (Human).